The sequence spans 386 residues: uncharacterized protein (386 aa).

The segment at 355–386 (PSEAQKVQVKSNKKPPIAPKPEHLKKRDHGLC) is disordered. Residues 377–386 (HLKKRDHGLC) are compositionally biased toward basic residues.

This is an uncharacterized protein from Rickettsia prowazekii (strain Madrid E).